We begin with the raw amino-acid sequence, 314 residues long: Small ribosomal subunit biogenesis GTPase RsgA (314 aa).

The segment at 1-20 is disordered; the sequence is MKRAPTKQPAKPAARGGERA. The CP-type G domain occupies 85–246; sequence SDQFKSKLFA…LIDSPGFQEF (162 aa). GTP-binding positions include 134–137 and 188–196; these read NKID and GQSGMGKST. 4 residues coordinate Zn(2+): Cys270, Cys275, His277, and Cys283.

This sequence belongs to the TRAFAC class YlqF/YawG GTPase family. RsgA subfamily. In terms of assembly, monomer. Associates with 30S ribosomal subunit, binds 16S rRNA. Zn(2+) serves as cofactor.

The protein resides in the cytoplasm. One of several proteins that assist in the late maturation steps of the functional core of the 30S ribosomal subunit. Helps release RbfA from mature subunits. May play a role in the assembly of ribosomal proteins into the subunit. Circularly permuted GTPase that catalyzes slow GTP hydrolysis, GTPase activity is stimulated by the 30S ribosomal subunit. The sequence is that of Small ribosomal subunit biogenesis GTPase RsgA from Burkholderia pseudomallei (strain K96243).